Reading from the N-terminus, the 128-residue chain is Mu-like prophage FluMu protein gp35 (128 aa).

Residues 53 to 87 are disordered; the sequence is TETGSQEGGEGLSKEPAGSDEQKQLRADPPSTDLN.

To phage Mu protein gp35. As to quaternary structure, monomer.

This chain is Mu-like prophage FluMu protein gp35, found in Haemophilus influenzae (strain ATCC 51907 / DSM 11121 / KW20 / Rd).